Reading from the N-terminus, the 299-residue chain is Delta-9 desaturase-like 1 protein (299 aa).

2 consecutive transmembrane segments (helical) span residues 31 to 51 (IDIARASAVGAVHLLCLLAPF) and 55 to 75 (WEALRFGVILAIVTSLSITFS). Residues 77 to 82 (HRNLTH) carry the Histidine box-1 motif. The short motif at 114-118 (HRFHH) is the Histidine box-2 element. 2 helical membrane-spanning segments follow: residues 174–194 (IGLHILTFWTLVYLWGGLPYL) and 198–218 (VGVGGTIGYNGTWLINSACHI). A Histidine box-3 motif is present at residues 246–250 (HNNHH). A helical transmembrane segment spans residues 262-282 (WYQVDLTWYLICFFQALGLAT).

This sequence belongs to the fatty acid desaturase type 1 family. The cofactor is Fe cation.

It is found in the endoplasmic reticulum membrane. It participates in lipid metabolism; polyunsaturated fatty acid biosynthesis. This is Delta-9 desaturase-like 1 protein from Arabidopsis thaliana (Mouse-ear cress).